The following is a 74-amino-acid chain: Apolipoprotein C-I, acidic form (74 aa).

The N-terminal stretch at 1–26 is a signal peptide; it reads MRLFLSLPVLVVVLSMVLEGPTPAQG.

Belongs to the apolipoprotein C1 family.

Its subcellular location is the secreted. The protein is Apolipoprotein C-I, acidic form (APOC1A) of Colobus guereza (Mantled guereza).